A 1392-amino-acid polypeptide reads, in one-letter code: Ankyrin repeat domain-containing protein 30B (1392 aa).

The disordered stretch occupies residues 1-21 (MKRLLAAAGKGVRGPEPPNPF). ANK repeat units follow at residues 72 to 101 (KKRT…QLNV), 105 to 134 (EGRT…DLNY), 138 to 167 (YGNT…VIEV), 171 to 200 (ASLT…NANA), and 204 to 233 (SKCT…DVFA). Disordered regions lie at residues 265–292 (PKNP…ERTP), 558–587 (AQMF…VSQK), 636–656 (DRET…PTCG), 671–690 (RETL…PTCG), 830–877 (KEGA…SDSE), and 904–926 (GKIE…QNSV). 2 stretches are compositionally biased toward polar residues: residues 267–280 (NPQN…STGT) and 576–586 (DSESPCETVSQ). The segment covering 636–650 (DRETFKAESPDKDGL) has biased composition (basic and acidic residues). The segment covering 830–840 (KEGATKTVTGQ) has biased composition (polar residues). 2 stretches are compositionally biased toward basic and acidic residues: residues 864–874 (LGRKEDTKSTS) and 904–915 (GKIEESPEKPSH). 2 coiled-coil regions span residues 960 to 1168 (RELK…KQDK) and 1270 to 1318 (ETQC…QQLV).

Expressed in brain, breast and testis.

The protein is Ankyrin repeat domain-containing protein 30B (ANKRD30B) of Homo sapiens (Human).